The sequence spans 173 residues: Ribosome maturation factor RimP (173 aa).

This sequence belongs to the RimP family.

It is found in the cytoplasm. Required for maturation of 30S ribosomal subunits. The sequence is that of Ribosome maturation factor RimP from Chlorobium phaeobacteroides (strain DSM 266 / SMG 266 / 2430).